Reading from the N-terminus, the 195-residue chain is CASP-like protein IN26 (195 aa).

Over 1–26 the chain is Cytoplasmic; the sequence is VAPTGSVETEKAGPSYKPKEYYKVTE. The helical transmembrane segment at 27–47 threads the bilayer; sequence AILRLLLLASLVVAVVVMVTS. At 48–75 the chain is on the extracellular side; it reads KETELISVKLDPFPPFMLPLTAKFTQSP. A helical transmembrane segment spans residues 76 to 96; that stretch reads AFIYFVAGLSVAGLYTIISTL. Residues 97-120 lie on the Cytoplasmic side of the membrane; that stretch reads ASFYNLLIKPGFCPALVSHFIILD. The helical transmembrane segment at 121 to 143 threads the bilayer; the sequence is VVMLGIVGTATGAAGGVAYIGLK. The Extracellular segment spans residues 144-163; the sequence is GNSHVGWTKVCNKYGKLCTH. The helical transmembrane segment at 164–184 threads the bilayer; sequence LGASLAVSFFAFIVLLLLIIL. Over 185–195 the chain is Cytoplasmic; that stretch reads SIHSLSKKIPK.

It belongs to the Casparian strip membrane proteins (CASP) family. In terms of assembly, homodimer and heterodimers.

It localises to the cell membrane. The chain is CASP-like protein IN26 (IN26) from Ipomoea nil (Japanese morning glory).